A 381-amino-acid polypeptide reads, in one-letter code: S-(hydroxymethyl)glutathione dehydrogenase (381 aa).

C49 lines the Zn(2+) pocket. An NAD(+)-binding site is contributed by H50. 7 residues coordinate Zn(2+): H71, E72, C101, C104, C107, C115, and C178. Residues 203 to 208 (GGGIVG), D227, and 298 to 300 (IGV) contribute to the NAD(+) site.

The protein belongs to the zinc-containing alcohol dehydrogenase family. Class-III subfamily. Zn(2+) is required as a cofactor.

The enzyme catalyses a primary alcohol + NAD(+) = an aldehyde + NADH + H(+). It carries out the reaction a secondary alcohol + NAD(+) = a ketone + NADH + H(+). The catalysed reaction is S-(hydroxymethyl)glutathione + NADP(+) = S-formylglutathione + NADPH + H(+). It catalyses the reaction S-(hydroxymethyl)glutathione + NAD(+) = S-formylglutathione + NADH + H(+). The enzyme catalyses S-nitrosoglutathione + NADH + H(+) = S-(hydroxysulfenamide)glutathione + NAD(+). Its function is as follows. Oxidizes long-chain alcohols and, in the presence of glutathione, is able to oxidize formaldehyde. Also acts as a S-nitroso-glutathione reductase by catalyzing the NADH-dependent reduction of S-nitrosoglutathione, thereby regulating protein S-nitrosylation. This chain is S-(hydroxymethyl)glutathione dehydrogenase (FDH1), found in Candida maltosa (Yeast).